Consider the following 406-residue polypeptide: Putative colanic acid biosynthesis glycosyltransferase WcaL (406 aa).

This sequence belongs to the glycosyltransferase group 1 family. Glycosyltransferase 4 subfamily.

The protein operates within slime biogenesis; slime polysaccharide biosynthesis. The sequence is that of Putative colanic acid biosynthesis glycosyltransferase WcaL (wcaL) from Salmonella typhimurium (strain LT2 / SGSC1412 / ATCC 700720).